Reading from the N-terminus, the 1436-residue chain is Probable deoxyribonuclease RhsB (1436 aa).

The disordered stretch occupies residues 16–42; that stretch reads HAGNRPNPPADRPQPCQGKPPTSPGKT. 2 consecutive transmembrane segments (helical) span residues 48–68 and 70–90; these read FLGALAGAVAGALVAAAVAAA and VFLVGVTGGLAVAAVGALAVF. 5 YD repeats span residues 486 to 521, 569 to 605, 612 to 647, 766 to 799, and 847 to 879; these read YNTAHRLTRWHDNDQTWARYEYDAQGRCVYTTCADG, YDEVGNLLREISPAGRVVEFTYLDDTGRVSTFTDGSG, YDDAQRLCGVTDPLGREWGWVYDAEGNPERLTGPDA, DLLTARTDAEGRTWRYEYDRESQQLIAVTAPDGS, and YDARGLLLRETAPDDTLHYRYDAAGRLTEVSSA.

This sequence belongs to the RHS/WapA nuclease family.

It localises to the membrane. In terms of biological role, toxic component of a toxin-immunity protein module, which functions as a cellular contact-dependent growth inhibition (CDI) system. This protein may be a nuclease that is specifically inhibited by its cognate immunity protein RhsBI. Upon expression of the C-terminus (residues 1284-1436) in E.coli growth is inhibited, cells elongate, nucleoids condense and plasmid DNA is degraded; these effects are blocked specifically by cognate immunity protein RshIB. Cell contact is necessary for growth inhibition. This is Probable deoxyribonuclease RhsB (rhsB) from Dickeya dadantii (strain 3937) (Erwinia chrysanthemi (strain 3937)).